The sequence spans 160 residues: SsrA-binding protein (160 aa).

It belongs to the SmpB family.

Its subcellular location is the cytoplasm. Required for rescue of stalled ribosomes mediated by trans-translation. Binds to transfer-messenger RNA (tmRNA), required for stable association of tmRNA with ribosomes. tmRNA and SmpB together mimic tRNA shape, replacing the anticodon stem-loop with SmpB. tmRNA is encoded by the ssrA gene; the 2 termini fold to resemble tRNA(Ala) and it encodes a 'tag peptide', a short internal open reading frame. During trans-translation Ala-aminoacylated tmRNA acts like a tRNA, entering the A-site of stalled ribosomes, displacing the stalled mRNA. The ribosome then switches to translate the ORF on the tmRNA; the nascent peptide is terminated with the 'tag peptide' encoded by the tmRNA and targeted for degradation. The ribosome is freed to recommence translation, which seems to be the essential function of trans-translation. This chain is SsrA-binding protein, found in Mannheimia succiniciproducens (strain KCTC 0769BP / MBEL55E).